The sequence spans 172 residues: Protein GrpE (172 aa).

Positions 1 to 24 (MNQDHPEFDSEDLAQNPPETDPLK) are disordered.

The protein belongs to the GrpE family. In terms of assembly, homodimer.

Its subcellular location is the cytoplasm. Participates actively in the response to hyperosmotic and heat shock by preventing the aggregation of stress-denatured proteins, in association with DnaK and GrpE. It is the nucleotide exchange factor for DnaK and may function as a thermosensor. Unfolded proteins bind initially to DnaJ; upon interaction with the DnaJ-bound protein, DnaK hydrolyzes its bound ATP, resulting in the formation of a stable complex. GrpE releases ADP from DnaK; ATP binding to DnaK triggers the release of the substrate protein, thus completing the reaction cycle. Several rounds of ATP-dependent interactions between DnaJ, DnaK and GrpE are required for fully efficient folding. The polypeptide is Protein GrpE (Xanthomonas oryzae pv. oryzae (strain PXO99A)).